Here is a 199-residue protein sequence, read N- to C-terminus: Fe/S biogenesis protein NfuA (199 aa).

Cys-151 and Cys-154 together coordinate [4Fe-4S] cluster.

This sequence belongs to the NfuA family. In terms of assembly, homodimer. Requires [4Fe-4S] cluster as cofactor.

In terms of biological role, involved in iron-sulfur cluster biogenesis. Binds a 4Fe-4S cluster, can transfer this cluster to apoproteins, and thereby intervenes in the maturation of Fe/S proteins. Could also act as a scaffold/chaperone for damaged Fe/S proteins. The sequence is that of Fe/S biogenesis protein NfuA from Stenotrophomonas maltophilia (strain K279a).